A 61-amino-acid chain; its full sequence is Large ribosomal subunit protein bL32 (61 aa).

Positions Met-1–Arg-16 are enriched in basic residues. Residues Met-1–Ala-61 are disordered. Over residues Val-28–Leu-44 the composition is skewed to basic and acidic residues.

Belongs to the bacterial ribosomal protein bL32 family.

In Xanthobacter autotrophicus (strain ATCC BAA-1158 / Py2), this protein is Large ribosomal subunit protein bL32.